A 504-amino-acid polypeptide reads, in one-letter code: MNTLIDTFTVRKDELFTALVQHIQISFVSLFIAVLIALPLGIYLTRHKRLAEPIIQVAAIFQTIPSLALLGLLIPLVGIGIVPAIIALVIYALLPILRNTYTGIKEVDPALVEASRAMGMNKWKRLYKVQLPLAMPVIMAGIRTAMVLIIGTATLAALIGAGGLGDLILLGIDRNDNSLILLGAIPAALLAILFDFLLRFLEKASFKSTIITISAGILLTAAIIVVPYFASDKKEITIAGKLGAEPEILINMYKLVIEDETDLKVNVKPNMGKTSFVFNALKSGDIDIYPEFTGTVLETFLKENAKTHDPEEVYTQARDGLAKDFDMTYLKPMKYNNTYALAVSPEFAKENNLEKISDLGPVSDQVKAGFTLEFKDRSDGYKGIQDKYGLTFSNLKTMEPKLRYNAIKSGDINLLDAYSTDSELAQYKLKVLEDDQQLFPPYQGAPLMLTKTLDKYPELKKPLNKLAGKITDDEMRKMNYEVNVNGKSAYTVAKDYLKDQGIIK.

The ABC transmembrane type-1 domain maps to 19–198; sequence LVQHIQISFV…LLAILFDFLL (180 aa). The next 6 helical transmembrane spans lie at 25–44, 57–74, 81–97, 146–170, 179–198, and 210–229; these read ISFVSLFIAVLIALPLGIYL, VAAIFQTIPSLALLGLLI, IVPAIIALVIYALLPIL, MVLIIGTATLAALIGAGGLGDLILL, LILLGAIPAALLAILFDFLL, and IITISAGILLTAAIIVVPYF. An ergothioneine binding domain region spans residues 231-504; sequence SDKKEITIAG…DYLKDQGIIK (274 aa).

In the N-terminal section; belongs to the binding-protein-dependent transport system permease family. It in the C-terminal section; belongs to the OsmX family. In terms of assembly, the complex is probably composed of at least an ATP-binding protein (EgtUA) and a transmembrane protein (EgtUBC).

Its subcellular location is the membrane. In terms of biological role, part of an ABC transporter complex EgtU required for the uptake of ergothioneine (EGT), a natural low-molecular weight (LMW) thiol antioxidant. Responsible for the translocation of the substrate across the membrane. Also contains a C-terminal periplasmic solute-binding domain (SBD) which binds to EGT with sub-micromolar affinity. Does not bind glycine betaine, carnitine, choline, proline, or cholate. Plays a role in bile acid tolerance. Dispensable for choline uptake. Probably not involved in betaine, carnitine or choline mediated osmo- or chill tolerance. Plays a role in enhancing virulence in mice. The polypeptide is Probable ergothioneine transporter EgtUBC (Listeria monocytogenes serovar 1/2a (strain ATCC BAA-679 / EGD-e)).